The following is a 454-amino-acid chain: Flagellum-specific ATP synthase (454 aa).

Residue 182–189 (ASSGLGKS) coordinates ATP.

Belongs to the ATPase alpha/beta chains family.

The protein localises to the cytoplasm. It carries out the reaction ATP + H2O + 4 H(+)(in) = ADP + phosphate + 5 H(+)(out). Probable catalytic subunit of a protein translocase for flagellum-specific export, or a proton translocase involved in local circuits at the flagellum. May be involved in a specialized protein export pathway that proceeds without signal peptide cleavage. The sequence is that of Flagellum-specific ATP synthase (fliI) from Buchnera aphidicola subsp. Baizongia pistaciae (strain Bp).